The following is a 173-amino-acid chain: Interferon gamma (173 aa).

The N-terminal stretch at 1 to 22 (MNATHCILALQLCLLAISGCSS) is a signal peptide. Gln23 carries the post-translational modification Pyrrolidone carboxylic acid. 2 N-linked (GlcNAc...) asparagine glycosylation sites follow: Asn38 and Asn105.

This sequence belongs to the type II (or gamma) interferon family. As to quaternary structure, homodimer. Interacts with IFNGR1 (via extracellular domain); this interaction promotes IFNGR1 dimerization. Released primarily from activated T lymphocytes.

The protein localises to the secreted. Its function is as follows. Type II interferon produced by immune cells such as T-cells and NK cells that plays crucial roles in antimicrobial, antiviral, and antitumor responses by activating effector immune cells and enhancing antigen presentation. Primarily signals through the JAK-STAT pathway after interaction with its receptor IFNGR1 to affect gene regulation. Upon IFNG binding, IFNGR1 intracellular domain opens out to allow association of downstream signaling components JAK2, JAK1 and STAT1, leading to STAT1 activation, nuclear translocation and transcription of IFNG-regulated genes. Many of the induced genes are transcription factors such as IRF1 that are able to further drive regulation of a next wave of transcription. Plays a role in class I antigen presentation pathway by inducing a replacement of catalytic proteasome subunits with immunoproteasome subunits. In turn, increases the quantity, quality, and repertoire of peptides for class I MHC loading. Increases the efficiency of peptide generation also by inducing the expression of activator PA28 that associates with the proteasome and alters its proteolytic cleavage preference. Up-regulates as well MHC II complexes on the cell surface by promoting expression of several key molecules such as cathepsins B/CTSB, H/CTSH, and L/CTSL. Participates in the regulation of hematopoietic stem cells during development and under homeostatic conditions by affecting their development, quiescence, and differentiation. The chain is Interferon gamma (IFNG) from Meriones unguiculatus (Mongolian jird).